The sequence spans 237 residues: Probable glutathione-independent glyoxalase HSP32 (237 aa).

Catalysis depends on residues Cys138, His139, and Glu170.

It belongs to the peptidase C56 family. HSP31-like subfamily. Homodimer.

The protein resides in the cytoplasm. It localises to the P-body. It catalyses the reaction methylglyoxal + H2O = (R)-lactate + H(+). In terms of biological role, catalyzes the conversion of methylglyoxal (MG) to D-lactate in a single glutathione (GSH)-independent step. May play a role in detoxifying endogenously produced glyoxals. Involved in protection against reactive oxygen species (ROS). Important for viability in stationary phase. May negatively regulate TORC1 in response to nutrient limitation. This Saccharomyces cerevisiae (strain ATCC 204508 / S288c) (Baker's yeast) protein is Probable glutathione-independent glyoxalase HSP32.